The primary structure comprises 162 residues: UPF0262 protein Pden_1958 (162 aa).

A disordered region spans residues 1–22 (MSQSANRLCRIDIDDSALPPPS).

It belongs to the UPF0262 family.

The protein is UPF0262 protein Pden_1958 of Paracoccus denitrificans (strain Pd 1222).